The primary structure comprises 365 residues: Isopentenyl-diphosphate delta-isomerase (365 aa).

8 to 9 (RK) contacts substrate. FMN-binding positions include 67–69 (SIT), S97, and N126. 97–99 (SQR) contacts substrate. Q160 contacts substrate. E161 is a binding site for Mg(2+). Residues K192, T222, 272 to 274 (GVR), and 293 to 294 (AL) contribute to the FMN site.

It belongs to the IPP isomerase type 2 family. As to quaternary structure, homooctamer. Dimer of tetramers. FMN is required as a cofactor. NADPH serves as cofactor. The cofactor is Mg(2+).

Its subcellular location is the cytoplasm. The enzyme catalyses isopentenyl diphosphate = dimethylallyl diphosphate. Involved in the biosynthesis of isoprenoids. Catalyzes the 1,3-allylic rearrangement of the homoallylic substrate isopentenyl (IPP) to its allylic isomer, dimethylallyl diphosphate (DMAPP). The protein is Isopentenyl-diphosphate delta-isomerase of Methanosarcina acetivorans (strain ATCC 35395 / DSM 2834 / JCM 12185 / C2A).